The primary structure comprises 261 residues: Zinc finger protein 664 (261 aa).

9 consecutive C2H2-type zinc fingers follow at residues 3–25 (YKCP…QKIH), 31–53 (HKCD…WRDH), 59–81 (YKCD…KKIH), 87–109 (YKCY…MRVH), 115–137 (YVCS…QRVH), 143–165 (FKCE…QRVH), 171–193 (YKCY…QRVH), 199–221 (YRCC…QRVH), and 227–249 (FKCD…QRVH). Residue Lys-257 forms a Glycyl lysine isopeptide (Lys-Gly) (interchain with G-Cter in SUMO2) linkage.

The protein belongs to the krueppel C2H2-type zinc-finger protein family.

It localises to the nucleus. May be involved in transcriptional regulation. This chain is Zinc finger protein 664 (ZNF664), found in Pongo abelii (Sumatran orangutan).